Reading from the N-terminus, the 144-residue chain is Ribosome-binding factor A (144 aa).

The disordered stretch occupies residues 121-144; that stretch reads KAQTGVEEPLENTAEGEENPSGGE. The span at 128 to 138 shows a compositional bias: acidic residues; sequence EPLENTAEGEE.

This sequence belongs to the RbfA family. In terms of assembly, monomer. Binds 30S ribosomal subunits, but not 50S ribosomal subunits or 70S ribosomes.

The protein resides in the cytoplasm. One of several proteins that assist in the late maturation steps of the functional core of the 30S ribosomal subunit. Associates with free 30S ribosomal subunits (but not with 30S subunits that are part of 70S ribosomes or polysomes). Required for efficient processing of 16S rRNA. May interact with the 5'-terminal helix region of 16S rRNA. The sequence is that of Ribosome-binding factor A from Synechococcus sp. (strain JA-2-3B'a(2-13)) (Cyanobacteria bacterium Yellowstone B-Prime).